Reading from the N-terminus, the 266-residue chain is ATP synthase subunit a (266 aa).

7 helical membrane-spanning segments follow: residues 28–48 (ISFTNSALWMVIAMAALAIFM), 90–110 (LIFTLFMFILFANLLGLVPLF), 125–145 (VTVTATLAAIAFGTVLVVGFT), 158–178 (HGTPMALIWLIPGIEAFSFIL), 187–207 (LFVAMTAGHVLLEVLANFIVN), 216–236 (AFLAGYYTLVGIPTFLLMIGI), and 239–259 (LEFLVCAIQAYVFALLTSLYL).

This sequence belongs to the ATPase A chain family. F-type ATPases have 2 components, CF(1) - the catalytic core - and CF(0) - the membrane proton channel. CF(1) has five subunits: alpha(3), beta(3), gamma(1), delta(1), epsilon(1). CF(0) has three main subunits: a(1), b(2) and c(9-12). The alpha and beta chains form an alternating ring which encloses part of the gamma chain. CF(1) is attached to CF(0) by a central stalk formed by the gamma and epsilon chains, while a peripheral stalk is formed by the delta and b chains.

It localises to the cell inner membrane. Its function is as follows. Key component of the proton channel; it plays a direct role in the translocation of protons across the membrane. In Zymomonas mobilis subsp. mobilis (strain ATCC 31821 / ZM4 / CP4), this protein is ATP synthase subunit a.